The primary structure comprises 854 residues: Patatin-like phospholipase domain-containing protein CHGG_02900 (854 aa).

Disordered regions lie at residues 1–29 (MAGP…YGFP), 58–138 (LSAP…PPLS), and 159–186 (QRRV…RSKD). Over residues 96–116 (DLARRPESSGVGFHDEDRTAR) the composition is skewed to basic and acidic residues. Residues 119 to 132 (PAGAATAAAAGVAT) show a composition bias toward low complexity. The helical transmembrane segment at 199-219 (WPLLGVVTCWLVGLSVVHVLA) threads the bilayer. Residues 387–578 (LCLSGGATFA…RTDIPIKALN (192 aa)) enclose the PNPLA domain. The GXSXG signature appears at 418–422 (GTSGG). Ser420 (nucleophile) is an active-site residue. Asp565 serves as the catalytic Proton acceptor. Disordered stretches follow at residues 724-776 (RENR…SILS) and 791-830 (RGGI…LEFG). Residues 729 to 751 (GGGLGDGGVGSSGGAGGGAGGGQ) show a composition bias toward gly residues. The span at 752 to 761 (AEAVAGQAAG) shows a compositional bias: low complexity. Residues 799 to 812 (TESEDETSDLDADF) show a composition bias toward acidic residues.

Belongs to the PLPL family.

Its subcellular location is the membrane. Probable lipid hydrolase. The sequence is that of Patatin-like phospholipase domain-containing protein CHGG_02900 from Chaetomium globosum (strain ATCC 6205 / CBS 148.51 / DSM 1962 / NBRC 6347 / NRRL 1970) (Soil fungus).